The sequence spans 339 residues: Putative NADP-dependent oxidoreductase YfmJ (339 aa).

NADP(+) is bound by residues 156-159 (GAVG), Lys-182, Tyr-198, Asn-222, 244-250 (CGAISSY), 277-279 (FIV), and Asn-327.

This sequence belongs to the NADP-dependent oxidoreductase L4BD family.

Putative quinone oxidoreductase that may contribute to the degradation of aromatic compounds. In Bacillus subtilis (strain 168), this protein is Putative NADP-dependent oxidoreductase YfmJ (yfmJ).